A 214-amino-acid polypeptide reads, in one-letter code: ATP-dependent Clp protease proteolytic subunit (214 aa).

The Nucleophile role is filled by S114. H139 is a catalytic residue.

The protein belongs to the peptidase S14 family. In terms of assembly, fourteen ClpP subunits assemble into 2 heptameric rings which stack back to back to give a disk-like structure with a central cavity, resembling the structure of eukaryotic proteasomes.

It is found in the cytoplasm. The enzyme catalyses Hydrolysis of proteins to small peptides in the presence of ATP and magnesium. alpha-casein is the usual test substrate. In the absence of ATP, only oligopeptides shorter than five residues are hydrolyzed (such as succinyl-Leu-Tyr-|-NHMec, and Leu-Tyr-Leu-|-Tyr-Trp, in which cleavage of the -Tyr-|-Leu- and -Tyr-|-Trp bonds also occurs).. Cleaves peptides in various proteins in a process that requires ATP hydrolysis. Has a chymotrypsin-like activity. Plays a major role in the degradation of misfolded proteins. In Nitrosomonas eutropha (strain DSM 101675 / C91 / Nm57), this protein is ATP-dependent Clp protease proteolytic subunit.